The chain runs to 389 residues: D-alanine--D-alanine ligase (389 aa).

Positions 1–12 (MSTENLPQNPEQ) are enriched in polar residues. The interval 1–22 (MSTENLPQNPEQSPRRPPRKPR) is disordered. Residues 169–379 (KAVFTSYGLK…YPELVDRLVQ (211 aa)) form the ATP-grasp domain. 205 to 260 (AGEHGWPLFVKPARAGSSIGITKVDDLAGLDEAIEEARRHDPKILVEAALRGREIE) contacts ATP. Residues Asp-333, Glu-346, and Asn-348 each contribute to the Mg(2+) site.

This sequence belongs to the D-alanine--D-alanine ligase family. Requires Mg(2+) as cofactor. It depends on Mn(2+) as a cofactor.

The protein localises to the cytoplasm. The catalysed reaction is 2 D-alanine + ATP = D-alanyl-D-alanine + ADP + phosphate + H(+). Its pathway is cell wall biogenesis; peptidoglycan biosynthesis. In terms of biological role, cell wall formation. This Streptomyces coelicolor (strain ATCC BAA-471 / A3(2) / M145) protein is D-alanine--D-alanine ligase (ddl).